Here is a 424-residue protein sequence, read N- to C-terminus: MRRNPSTFKYIPLRIDFMSEVPLPEVNIGLVGHVDHGKTTLVAALSGVWTDRHSEELKRGISIKLGYADATFRKCPECEPPEAYTVEEICPIHGVETEILRTVSFVDSPGHEMLMATMLSGAAIMDGAVLVIAANEKCPRPQTKEHLMALQIIGIDKIVIAQNKIDIVSRERVLENYQEIKEFVKGTVAENAPIIPISAQQKVNMDALIEAIEETIPTPERDLDSPPLMHVARSFDVNKPGTPPEKLLGGVLGGSLSRGRIRVGDEIEIRPGVKDERGNWNPLFTEVQSIVASGRFVDEATPGGLVGIATKLDPTLTKSDALVGNVVGHPGNLPDVLTSFTMEVNLLERVVGLDEEMEVEKIKMNEPLMLAVGTAITLGVVTSARDDIVEVKLRRPVCADKGSRVAISRRVGSRWRLIGAGIIR.

Positions 23-220 (LPEVNIGLVG…AIEETIPTPE (198 aa)) constitute a tr-type G domain. The segment at 32-39 (GHVDHGKT) is G1. Mg(2+) contacts are provided by Asp35, Thr39, Gly60, and Ser62. GTP is bound at residue 35 to 40 (DHGKTT). The tract at residues 60–64 (GISIK) is G2. Positions 107–110 (DSPG) are G3. Residues 163–166 (NKID) and 198–200 (SAQ) each bind GTP. The segment at 163–166 (NKID) is G4. The G5 stretch occupies residues 198–200 (SAQ).

Belongs to the TRAFAC class translation factor GTPase superfamily. Classic translation factor GTPase family. EIF2G subfamily. As to quaternary structure, heterotrimer composed of an alpha, a beta and a gamma chain. Mg(2+) serves as cofactor.

The catalysed reaction is GTP + H2O = GDP + phosphate + H(+). In terms of biological role, eIF-2 functions in the early steps of protein synthesis by forming a ternary complex with GTP and initiator tRNA. This is Translation initiation factor 2 subunit gamma from Archaeoglobus fulgidus (strain ATCC 49558 / DSM 4304 / JCM 9628 / NBRC 100126 / VC-16).